Consider the following 319-residue polypeptide: Transaldolase (319 aa).

K125 acts as the Schiff-base intermediate with substrate in catalysis.

Belongs to the transaldolase family. Type 1 subfamily. As to quaternary structure, homodimer.

It is found in the cytoplasm. It catalyses the reaction D-sedoheptulose 7-phosphate + D-glyceraldehyde 3-phosphate = D-erythrose 4-phosphate + beta-D-fructose 6-phosphate. It functions in the pathway carbohydrate degradation; pentose phosphate pathway; D-glyceraldehyde 3-phosphate and beta-D-fructose 6-phosphate from D-ribose 5-phosphate and D-xylulose 5-phosphate (non-oxidative stage): step 2/3. Functionally, transaldolase is important for the balance of metabolites in the pentose-phosphate pathway. The polypeptide is Transaldolase (Ralstonia nicotianae (strain ATCC BAA-1114 / GMI1000) (Ralstonia solanacearum)).